Reading from the N-terminus, the 316-residue chain is Transaldolase (316 aa).

Lys125 acts as the Schiff-base intermediate with substrate in catalysis.

The protein belongs to the transaldolase family. Type 1 subfamily. Homodimer.

Its subcellular location is the cytoplasm. The catalysed reaction is D-sedoheptulose 7-phosphate + D-glyceraldehyde 3-phosphate = D-erythrose 4-phosphate + beta-D-fructose 6-phosphate. The protein operates within carbohydrate degradation; pentose phosphate pathway; D-glyceraldehyde 3-phosphate and beta-D-fructose 6-phosphate from D-ribose 5-phosphate and D-xylulose 5-phosphate (non-oxidative stage): step 2/3. Its function is as follows. Transaldolase is important for the balance of metabolites in the pentose-phosphate pathway. This is Transaldolase from Acidovorax sp. (strain JS42).